Here is a 498-residue protein sequence, read N- to C-terminus: NAC domain-containing protein 75 (498 aa).

Positions 48-215 (LPAGVKFDPT…ELVVSKIFYQ (168 aa)) constitute an NAC domain. Residues 166-221 (KGCKKILVLYTNFGKNRKPEKTNWVMHQYHLGTHEEEKEGELVVSKIFYQTQPRQC) mediate DNA binding. Disordered regions lie at residues 225–278 (SSTS…PNRS), 338–374 (VMAEQHRHRHQPSSSTSHHMAHDHHHHHHQQQQQRHH), 423–443 (QQQLRQEGEEEHNDGKMGGRS), and 457–498 (STTH…DHHG). Over residues 233 to 248 (IGGGGGEASSGGGGGE) the composition is skewed to gly residues. Positions 256–266 (GTTSGGSCSSS) are enriched in low complexity. The segment covering 356–374 (HMAHDHHHHHHQQQQQRHH) has biased composition (basic residues). A compositionally biased stretch (polar residues) spans 466–475 (GSSSMGNQQE).

Expressed in the vascular cylinder of roots. Expressed in the differentiation zone of the root stele.

It is found in the nucleus. Its function is as follows. Transcription activator involved in xylem formation. Promotes the expression of the secondary wall-associated transcription factor MYB46. Functions upstream of NAC030/VND7, a master switch of xylem vessel differentiation. Acts as a upstream regulator of NAC101/VND6 and LBD30/ASL19. The chain is NAC domain-containing protein 75 from Arabidopsis thaliana (Mouse-ear cress).